Reading from the N-terminus, the 723-residue chain is Ribosome quality control complex subunit 1 (723 aa).

Residues Ser-21 to Asp-125 are disordered. Residues Lys-27–Asn-37 are compositionally biased toward polar residues. Basic residues predominate over residues Ser-93–Asn-108. Basic and acidic residues predominate over residues His-109–Gly-118. Ser-119 bears the Phosphoserine mark. Thr-158 is modified (phosphothreonine). Position 160 is a phosphoserine (Ser-160).

Belongs to the TCF25 family. In terms of assembly, component of the ribosome quality control complex (RQC), composed of the E3 ubiquitin ligase RKR1/LTN1, RQC1 and RQC2, as well as CDC48 and its ubiquitin-binding cofactors. RQC forms a stable complex with 60S ribosomal subunits.

It localises to the cytoplasm. Its function is as follows. Component of the ribosome quality control complex (RQC), a ribosome-associated complex that mediates ubiquitination and extraction of incompletely synthesized nascent chains for proteasomal degradation. Within the RQC complex, RQC1 is essential for the recruitment of CDC48 to incompletely synthesized nascent polypeptides that are ubiquitinated by RKR1/LTN1. The sequence is that of Ribosome quality control complex subunit 1 from Saccharomyces cerevisiae (strain ATCC 204508 / S288c) (Baker's yeast).